Here is a 103-residue protein sequence, read N- to C-terminus: Major carboxysome shell protein CsoS1 (103 aa).

Residues 9 to 94 (ALGMIETRGL…PHREVEPALG (86 aa)) enclose the BMC domain.

This sequence belongs to the bacterial microcompartments protein family. CsoS1 subfamily. Homohexamer with a small central pore. A CsoS1-CsoS1D-CsoS2 complex can be isolated following expression in E.coli. Forms a CsoS2-CsoS1-RuBisCO complex.

It is found in the carboxysome. Functionally, the major shell protein of the carboxysome, a polyhedral inclusion where RuBisCO (ribulose bisphosphate carboxylase, ccbL-ccbS) is sequestered. Assembles into hexamers which make sheets that form the facets of the polyhedral carboxysome. There are estimated to be 538 CsoS1 hexamers per carboxysome; note this number includes the probable carboxysome shell vertex proteins CsoS4A and CsoS4B. The polypeptide is Major carboxysome shell protein CsoS1 (Prochlorococcus marinus subsp. pastoris (strain CCMP1986 / NIES-2087 / MED4)).